The following is a 469-amino-acid chain: Glutamate--tRNA ligase 2 (469 aa).

Positions 10-20 (PSPTGFLHIGS) match the 'HIGH' region motif. The 'KMSKS' region motif lies at 239–243 (KLSKR). Position 242 (Lys-242) interacts with ATP.

It belongs to the class-I aminoacyl-tRNA synthetase family. Glutamate--tRNA ligase type 1 subfamily. As to quaternary structure, monomer.

The protein localises to the cytoplasm. It catalyses the reaction tRNA(Glu) + L-glutamate + ATP = L-glutamyl-tRNA(Glu) + AMP + diphosphate. Functionally, catalyzes the attachment of glutamate to tRNA(Glu) in a two-step reaction: glutamate is first activated by ATP to form Glu-AMP and then transferred to the acceptor end of tRNA(Glu). This is Glutamate--tRNA ligase 2 from Rickettsia typhi (strain ATCC VR-144 / Wilmington).